Consider the following 690-residue polypeptide: ATP-dependent DNA helicase Hel308 (690 aa).

Residues Gln26 and 45–52 each bind ATP; that span reads IPTASGKT. Residues 32 to 188 enclose the Helicase ATP-binding domain; sequence AGYLESEDNY…WLDARVVEHD (157 aa). The DEAH box motif lies at 133-136; the sequence is DEFH. The Helicase C-terminal domain occupies 208–417; the sequence is EKNDVVLKVL…NRDALYRQII (210 aa).

Belongs to the helicase family. Hel308 subfamily. As to quaternary structure, monomer. Binds replication protein A (RPA), in presence and absence of DNA.

The enzyme catalyses Couples ATP hydrolysis with the unwinding of duplex DNA by translocating in the 3'-5' direction.. The catalysed reaction is ATP + H2O = ADP + phosphate + H(+). Functionally, DNA-dependent ATPase and 3'-5' DNA helicase that may be involved in repair of stalled replication forks. Helicase with 3'-to 5'- polarity; able to unwind over 100 bp of DNA at 50 degrees Celsius. Unwinds forked DNA, preferentially on lagging strand forks; has weaker activity on Holliday junctions. Displaces the invading strand in DNA D-loops. Unwinds short oligonucleotides from dsDNA with 3'- but not blunt ends or 5'-ssDNA tails in an ATP-dependent manner. ATPase activity is stimulated by ssDNA but not dsDNA, protein binds ssDNA, dsDNA with 5'- or 3'-overhangs but not blunt ended dsDNA and replication forks. Replication forks bind both this protein and RPA. RPA does not stimulate the helicase activity of this protein. In Methanothermobacter thermautotrophicus (strain ATCC 29096 / DSM 1053 / JCM 10044 / NBRC 100330 / Delta H) (Methanobacterium thermoautotrophicum), this protein is ATP-dependent DNA helicase Hel308.